Here is a 143-residue protein sequence, read N- to C-terminus: Fluoride-specific ion channel FluC (143 aa).

A run of 4 helical transmembrane segments spans residues 6–26 (CILV…VSVL), 38–58 (TILI…LTLA), 70–90 (LFVM…SLQT), and 103–123 (MVNV…GHVV). Gly-78 and Thr-81 together coordinate Na(+).

The protein belongs to the fluoride channel Fluc/FEX (TC 1.A.43) family.

The protein localises to the cell inner membrane. It catalyses the reaction fluoride(in) = fluoride(out). Its activity is regulated as follows. Na(+) is not transported, but it plays an essential structural role and its presence is essential for fluoride channel function. Its function is as follows. Fluoride-specific ion channel. Important for reducing fluoride concentration in the cell, thus reducing its toxicity. In Methylobacterium radiotolerans (strain ATCC 27329 / DSM 1819 / JCM 2831 / NBRC 15690 / NCIMB 10815 / 0-1), this protein is Fluoride-specific ion channel FluC.